The chain runs to 1131 residues: Chitin synthase 1 (1131 aa).

The span at 1–20 shows a compositional bias: basic and acidic residues; that stretch reads MSDQNNRSRNEYHSNRKNEP. The disordered stretch occupies residues 1–22; that stretch reads MSDQNNRSRNEYHSNRKNEPSY. Phosphoserine is present on residues Ser34, Ser35, Ser270, Ser299, and Ser318. A disordered region spans residues 282-305; the sequence is YLHDDSRPVNDGKEELDSVKSGYS. At Thr328 the chain carries Phosphothreonine. Ser358 is modified (phosphoserine). The next 7 helical transmembrane spans lie at 795 to 815, 833 to 853, 866 to 886, 914 to 934, 942 to 962, 1042 to 1062, and 1101 to 1121; these read FFYL…FFLV, VLSV…FILS, VLTC…SIFM, IVIS…IYLQ, FIQY…YAFC, LVII…LETG, and ILWL…IYMI.

The protein belongs to the chitin synthase family.

The protein resides in the cell membrane. It carries out the reaction [(1-&gt;4)-N-acetyl-beta-D-glucosaminyl](n) + UDP-N-acetyl-alpha-D-glucosamine = [(1-&gt;4)-N-acetyl-beta-D-glucosaminyl](n+1) + UDP + H(+). Its activity is regulated as follows. Requires proteolytic activation. In terms of biological role, polymerizes chitin, a structural polymer of the cell wall and septum, by transferring the sugar moiety of UDP-GlcNAc to the non-reducing end of the growing chitin polymer. Required for mitotic division septum formation during adverse conditions. The chain is Chitin synthase 1 (CHS1) from Saccharomyces cerevisiae (strain ATCC 204508 / S288c) (Baker's yeast).